The sequence spans 288 residues: Mycothiol S-conjugate amidase (288 aa).

Zn(2+) contacts are provided by His12, Asp15, and His142.

Belongs to the MshB deacetylase family. Mca subfamily. In terms of assembly, monomer. Requires Zn(2+) as cofactor.

The enzyme catalyses mycothiol S-conjugate + H2O = an N-acetyl-L-cysteine-S-conjugate + 1D-myo-inositol 2-amino-2-deoxy-alpha-D-glucopyranoside. Partially inhibited by MSH when MSmB is used as substrate. Competitively inhibited by the GlcNAc-cyclohexyl derivative 5-(4-chlorophenyl)-N-((2R,3R,4R,5S,6R)-2-(cyclohexylthio)-tetrahydro-4,5-dihydroxy-6-(hydroxymethyl)-2H-pyran-3-yl)furan-2-carboxamide, which also inhibits MshB. Its function is as follows. A mycothiol (MSH, N-acetyl-cysteinyl-glucosaminyl-inositol) S-conjugate amidase, it recycles conjugated MSH to the N-acetyl cysteine conjugate and the MSH precursor. Involved in MSH-dependent detoxification of a number of alkylating agents and antibiotics. Activity is specific for the mycothiol moiety. Has a low but measurable deacetylation activity on GlcNAc-Ins (N-acetyl-glucosaminyl-inositol), and thus can also directly contribute to the production of MSH. The chain is Mycothiol S-conjugate amidase from Mycobacterium tuberculosis (strain ATCC 25618 / H37Rv).